A 281-amino-acid polypeptide reads, in one-letter code: Elongation factor 1-delta (281 aa).

A2 is subject to N-acetylalanine. K17 is subject to N6-acetyllysine. S37, E40, S44, and S60 each carry phosphoserine. Phosphothreonine is present on T73. A leucine-zipper region spans residues 80 to 115; it reads LVVRIASLEVENQSLRGVVQELQQAISKLEARLNVL. Residues S86, N91, L94, and S106 each carry the phosphoserine modification. The residue at position 107 (K107) is an N6-acetyllysine. At K117 the chain carries N6-acetyllysine; alternate. An N6-succinyllysine; alternate modification is found at K117. Residues 118–172 are disordered; that stretch reads SSPGHRATAPQTQHVSPMRQVEPPAKKPATPAEDDEDDDIDLFGSDNEEEDKEAA. Position 119 is a phosphoserine (S119). Phosphothreonine is present on T129. A Phosphoserine modification is found at S133. A Phosphothreonine modification is found at T147. The segment covering 149 to 169 has biased composition (acidic residues); the sequence is AEDDEDDDIDLFGSDNEEEDK. Phosphoserine; by CK2 is present on S162. Residues 173–281 form a catalytic (GEF) region; that stretch reads QLREERLRQY…SVDIAAFNKI (109 aa).

Belongs to the EF-1-beta/EF-1-delta family. In terms of assembly, EF-1 is composed of 4 subunits: alpha, beta, delta isoform 1, and gamma. Isoform 2 interacts with HSF1 and NFE2L2. As to expression, isoform 2 is specifically expressed in brain, cerebellum and testis.

It is found in the nucleus. Functionally, EF-1-beta and EF-1-delta stimulate the exchange of GDP bound to EF-1-alpha to GTP, regenerating EF-1-alpha for another round of transfer of aminoacyl-tRNAs to the ribosome. Regulates induction of heat-shock-responsive genes through association with heat shock transcription factors and direct DNA-binding at heat shock promoter elements (HSE). The sequence is that of Elongation factor 1-delta (EEF1D) from Homo sapiens (Human).